The primary structure comprises 253 residues: Phosphate import ATP-binding protein PstB (253 aa).

An ABC transporter domain is found at 7 to 248 (IEVEDLNVYF…PRDKRTEDYI (242 aa)). ATP is bound at residue 39 to 46 (GPSGCGKS).

This sequence belongs to the ABC transporter superfamily. Phosphate importer (TC 3.A.1.7) family. As to quaternary structure, the complex is composed of two ATP-binding proteins (PstB), two transmembrane proteins (PstC and PstA) and a solute-binding protein (PstS).

It is found in the cell membrane. It carries out the reaction phosphate(out) + ATP + H2O = ADP + 2 phosphate(in) + H(+). Its function is as follows. Part of the ABC transporter complex PstSACB involved in phosphate import. Responsible for energy coupling to the transport system. This is Phosphate import ATP-binding protein PstB from Methanothermobacter thermautotrophicus (strain ATCC 29096 / DSM 1053 / JCM 10044 / NBRC 100330 / Delta H) (Methanobacterium thermoautotrophicum).